The chain runs to 555 residues: Glutamate--tRNA ligase (555 aa).

A 'HIGH' region motif is present at residues 100 to 110; sequence PNPSGPLHIGH.

The protein belongs to the class-I aminoacyl-tRNA synthetase family. Glutamate--tRNA ligase type 2 subfamily.

It localises to the cytoplasm. The catalysed reaction is tRNA(Glu) + L-glutamate + ATP = L-glutamyl-tRNA(Glu) + AMP + diphosphate. In terms of biological role, catalyzes the attachment of glutamate to tRNA(Glu) in a two-step reaction: glutamate is first activated by ATP to form Glu-AMP and then transferred to the acceptor end of tRNA(Glu). In Methanococcus maripaludis (strain C6 / ATCC BAA-1332), this protein is Glutamate--tRNA ligase.